We begin with the raw amino-acid sequence, 100 residues long: NADH-quinone oxidoreductase subunit K (100 aa).

3 helical membrane-spanning segments follow: residues 4-24, 28-48, and 60-80; these read LTHG…GLVI, LLFM…AFVV, and VMYI…LALL.

It belongs to the complex I subunit 4L family. As to quaternary structure, NDH-1 is composed of 13 different subunits. Subunits NuoA, H, J, K, L, M, N constitute the membrane sector of the complex.

The protein localises to the cell inner membrane. It carries out the reaction a quinone + NADH + 5 H(+)(in) = a quinol + NAD(+) + 4 H(+)(out). Functionally, NDH-1 shuttles electrons from NADH, via FMN and iron-sulfur (Fe-S) centers, to quinones in the respiratory chain. The immediate electron acceptor for the enzyme in this species is believed to be ubiquinone. Couples the redox reaction to proton translocation (for every two electrons transferred, four hydrogen ions are translocated across the cytoplasmic membrane), and thus conserves the redox energy in a proton gradient. This is NADH-quinone oxidoreductase subunit K from Salmonella agona (strain SL483).